A 402-amino-acid polypeptide reads, in one-letter code: Flavohemoprotein (402 aa).

Residues 1–136 form the Globin domain; that stretch reads MLSEKTIEIV…IADAFISIEA (136 aa). A heme b-binding site is contributed by His85. Residues Tyr95 and Glu135 each act as charge relay system in the active site. A reductase region spans residues 147–402; that stretch reads GGWKDFRNFV…EFFGPAASLQ (256 aa). Residues 150–260 form the FAD-binding FR-type domain; the sequence is KDFRNFVVVK…SAPAGDFVLN (111 aa). FAD-binding positions include Tyr188 and 204-207; that span reads RQYS. 273 to 278 lines the NADP(+) pocket; that stretch reads GVGITP. 394–397 serves as a coordination point for FAD; that stretch reads FFGP.

The protein belongs to the globin family. Two-domain flavohemoproteins subfamily. In the C-terminal section; belongs to the flavoprotein pyridine nucleotide cytochrome reductase family. Requires heme b as cofactor. The cofactor is FAD.

The enzyme catalyses 2 nitric oxide + NADPH + 2 O2 = 2 nitrate + NADP(+) + H(+). The catalysed reaction is 2 nitric oxide + NADH + 2 O2 = 2 nitrate + NAD(+) + H(+). Functionally, is involved in NO detoxification in an aerobic process, termed nitric oxide dioxygenase (NOD) reaction that utilizes O(2) and NAD(P)H to convert NO to nitrate, which protects the bacterium from various noxious nitrogen compounds. Therefore, plays a central role in the inducible response to nitrosative stress. In Bacillus anthracis, this protein is Flavohemoprotein.